A 555-amino-acid polypeptide reads, in one-letter code: MAPAAALMSKCQEEEEIVRPVADFSPSLWGDRFHSFSLDNQVAEKYVEEIETLKEQTRSMLMSGKTLAEKLNLIDIVERLGIAYHFEKQIDDMLNHIFNIDPNFEAHEYNDLCTLSLQFRILRQHGYYISPKIFSRFQDANGKFKESLCDDIRGILNLYEASHVRTHGEDTLEEALAFSTAHLESAAPHLKSPLSKQVTHALEQSLHKSIPRVETRYFISIYEEEELKNDVFLRFAKLDFNLLQMLHKQELSEVSRWWKDLDFVTTLPYARDRAVECYFWTMGVYAEPQYSQARVMLAKTIAMISIVDDTFDAYGIVKELEVYTDAIQRWDVSQIDRLPEYMKISYKALLDLYNDYETELSNDGRSDVVQYAKERMKEIVRNYFVEAKWFIEGYMPPVSEYLSNALATSTYYLLTTTSYLGMKSATKKDFEWLAKNPKILEANVTLCRVIDDIATYEVEKGRGQIATGIECYMRDYGVSTQVAMDKFQEMAETAWKDVNEGILRPTPVSAKILTRILNLARIIDVTYKHNQDGYTHPEKVLKPHIIALLVDSIEI.

5 residues coordinate Mg(2+): Asp-308, Asp-312, Asp-451, Thr-455, and Glu-459. Residues 308–312 carry the DDXXD motif motif; sequence DDTFD.

The protein belongs to the terpene synthase family. Tpsa subfamily. It depends on Mg(2+) as a cofactor. Mn(2+) serves as cofactor. In terms of tissue distribution, expressed in stem and leaf trichomes. Detected in roots, fruits and flowers.

Its subcellular location is the cytoplasm. The enzyme catalyses (2E,6E)-farnesyl diphosphate = viridiflorene + diphosphate. Its pathway is secondary metabolite biosynthesis; terpenoid biosynthesis. In terms of biological role, sesquiterpene synthase involved in the production of viridiflorene from (E,E)-farnesyl diphosphate (FPP). Has no activity with (Z,Z)-FPP. Can act with a low efficiency as a monoterpene synthase with geranyl diphosphate as substrate. In Solanum lycopersicum (Tomato), this protein is Sesquiterpene synthase 31.